The primary structure comprises 654 residues: DNA-directed RNA polymerase III subunit RPC3 (654 aa).

Threonine 27 is modified (phosphothreonine). 2 disordered regions span residues 381 to 401 (LSRK…ASLP) and 422 to 448 (KSLQ…EDPH). Serine 392 and serine 394 each carry phosphoserine. Over residues 429 to 444 (DTQEEDEEEEDLDADT) the composition is skewed to acidic residues. A leucine-zipper region spans residues 581-602 (LEWNMANLLFKKEKLKQENSTL).

This sequence belongs to the RNA polymerase beta chain family. Component of the RNA polymerase III (Pol III) complex consisting of 17 subunits.

The protein localises to the cytoplasm. It localises to the nucleus. Its function is as follows. DNA-dependent RNA polymerase catalyzes the transcription of DNA into RNA using the four ribonucleoside triphosphates as substrates. Specific core component of RNA polymerase III which synthesizes small RNAs, such as 5S rRNA and tRNAs. The polypeptide is DNA-directed RNA polymerase III subunit RPC3 (RPC82) (Saccharomyces cerevisiae (strain YJM789) (Baker's yeast)).